The following is a 697-amino-acid chain: Phenylalanine--tRNA ligase beta subunit, chloroplastic (697 aa).

The 86-residue stretch at asparagine 283–serine 368 folds into the B5 domain. Mg(2+) is bound by residues aspartate 346, aspartate 352, glutamate 355, and glutamate 356. The FDX-ACB domain maps to serine 609–leucine 697.

The protein belongs to the phenylalanyl-tRNA synthetase beta subunit family. Type 1 subfamily. As to quaternary structure, tetramer of two alpha and two beta subunits. The cofactor is Mg(2+).

The protein resides in the plastid. Its subcellular location is the chloroplast. The catalysed reaction is tRNA(Phe) + L-phenylalanine + ATP = L-phenylalanyl-tRNA(Phe) + AMP + diphosphate + H(+). The sequence is that of Phenylalanine--tRNA ligase beta subunit, chloroplastic from Gracilaria tenuistipitata var. liui (Red alga).